Reading from the N-terminus, the 220-residue chain is Thiamine-phosphate synthase (220 aa).

Residues 39–43 and N80 contribute to the 4-amino-2-methyl-5-(diphosphooxymethyl)pyrimidine site; that span reads QLRDK. Residues D81 and D100 each coordinate Mg(2+). S119 serves as a coordination point for 4-amino-2-methyl-5-(diphosphooxymethyl)pyrimidine. 2-[(2R,5Z)-2-carboxy-4-methylthiazol-5(2H)-ylidene]ethyl phosphate is bound at residue 145 to 147; it reads TPT. K148 provides a ligand contact to 4-amino-2-methyl-5-(diphosphooxymethyl)pyrimidine. A 2-[(2R,5Z)-2-carboxy-4-methylthiazol-5(2H)-ylidene]ethyl phosphate-binding site is contributed by G176.

Belongs to the thiamine-phosphate synthase family. Mg(2+) is required as a cofactor.

The enzyme catalyses 2-[(2R,5Z)-2-carboxy-4-methylthiazol-5(2H)-ylidene]ethyl phosphate + 4-amino-2-methyl-5-(diphosphooxymethyl)pyrimidine + 2 H(+) = thiamine phosphate + CO2 + diphosphate. It carries out the reaction 2-(2-carboxy-4-methylthiazol-5-yl)ethyl phosphate + 4-amino-2-methyl-5-(diphosphooxymethyl)pyrimidine + 2 H(+) = thiamine phosphate + CO2 + diphosphate. It catalyses the reaction 4-methyl-5-(2-phosphooxyethyl)-thiazole + 4-amino-2-methyl-5-(diphosphooxymethyl)pyrimidine + H(+) = thiamine phosphate + diphosphate. The protein operates within cofactor biosynthesis; thiamine diphosphate biosynthesis; thiamine phosphate from 4-amino-2-methyl-5-diphosphomethylpyrimidine and 4-methyl-5-(2-phosphoethyl)-thiazole: step 1/1. Condenses 4-methyl-5-(beta-hydroxyethyl)thiazole monophosphate (THZ-P) and 2-methyl-4-amino-5-hydroxymethyl pyrimidine pyrophosphate (HMP-PP) to form thiamine monophosphate (TMP). This Mycobacterium ulcerans (strain Agy99) protein is Thiamine-phosphate synthase.